Reading from the N-terminus, the 765-residue chain is MLLRLLLAWVAAVPALGQVPWTPEPRAACGPSSCYALFPRRRTFLEAWRACRELGGNLATPRTPEEAQRVDSLVGVGPANGLLWIGLQRQARQCQPQRPLRGFIWTTGDQDTAFTNWAQPATEGPCPAQRCAALEASGEHRWLEGSCTLAVDGYLCQFGFEGACPALPLEVGQAGPAVYTTPFNLVSSEFEWLPFGSVAAVQCQAGRGASLLCVKQPSGGVGWSQTGPLCPGTGCGPDNGGCEHECVEEVDGAVSCRCSEGFRLAADGHSCEDPCAQAPCEQQCEPGGPQGYSCHCRLGFRPAEDDPHRCVDTDECQIAGVCQQMCVNYVGGFECYCSEGHELEADGISCSPAGAMGAQASQDLRDELLDDGEEGEDEEEPWEDFDGTWTEEQGILWLAPTHPPDFGLPYRPNFPQDGEPQRLHLEPTWPPPLSAPRGPYHSSVVSATRPMVISATRPTLPSAHKTSVISATRPPLSPVHPPAMAPATPPAVFSEHQIPKIKANYPDLPFGHKPGITSATHPARSPPYQPPIISTNYPQVFPPHQAPMSPDTHTITYLPPVPPHLDPGDTTSKAHQHPLLPDAPGIRTQAPQLSVSALQPPLPTNSRSSVHETPVPAANQPPAFPSSPLPPQRPTNQTSSISPTHSYSRAPLVPREGVPSPKSVPQLPSVPSTAAPTALAESGLAGQSQRDDRWLLVALLVPTCVFLVVLLALGIVYCTRCGSHAPNKRITDCYRWVTHAGNKSSTEPMPPRGSLTGVQTCRTSV.

Positions 1–17 are cleaved as a signal peptide; it reads MLLRLLLAWVAAVPALG. Over 18–695 the chain is Extracellular; the sequence is QVPWTPEPRA…GQSQRDDRWL (678 aa). In terms of domain architecture, C-type lectin spans 30–156; sequence GPSSCYALFP…CTLAVDGYLC (127 aa). Cystine bridges form between Cys131/Cys147, Cys164/Cys213, Cys203/Cys230, Cys316/Cys326, Cys322/Cys335, and Cys337/Cys350. The region spanning 162–232 is the Sushi domain; it reads GACPALPLEV…WSQTGPLCPG (71 aa). In terms of domain architecture, EGF-like; calcium-binding spans 312–351; sequence DTDECQIAGVCQQMCVNYVGGFECYCSEGHELEADGISCS. 6 O-linked (GalNAc...) threonine glycosylation sites follow: Thr401, Thr428, Thr448, Thr456, Thr459, and Thr466. O-linked (GalNAc...) serine glycosylation is found at Ser467 and Ser470. O-linked (GalNAc...) threonine glycosylation is present at Thr472. O-linked (GalNAc...) serine glycosylation is present at Ser477. O-linked (GalNAc...) threonine glycosylation is found at Thr488, Thr517, Thr520, Thr535, Thr552, Thr554, Thr556, Thr570, Thr571, Thr604, and Thr613. The tract at residues 548 to 675 is disordered; sequence MSPDTHTITY…QLPSVPSTAA (128 aa). Residues 622–633 are compositionally biased toward pro residues; sequence PAFPSSPLPPQR. Residues Ser626 and Ser627 are each glycosylated (O-linked (GalNAc...) serine). O-linked (GalNAc...) threonine glycans are attached at residues Thr635 and Thr638. Positions 635 to 647 are enriched in polar residues; it reads TNQTSSISPTHSY. O-linked (GalNAc...) serine glycosylation is found at Ser639 and Ser640. Thr644 is a glycosylation site (O-linked (GalNAc...) threonine). An O-linked (GalNAc...) serine glycan is attached at Ser663. Thr673 is a glycosylation site (O-linked (GalNAc...) threonine). The chain crosses the membrane as a helical span at residues 696-716; that stretch reads LVALLVPTCVFLVVLLALGIV. Topologically, residues 717-765 are cytoplasmic; that stretch reads YCTRCGSHAPNKRITDCYRWVTHAGNKSSTEPMPPRGSLTGVQTCRTSV. Ser754 carries the phosphoserine modification.

As to quaternary structure, interacts with PDGFRA; this interaction promotes PDGF receptor signaling pathway. Interacts with integrin beta-1/ITGB1. Interacts with insulin receptor/INSR; this interaction diminishes INSR autophosphorylation. Post-translationally, O-glycosylated by sialylated oligosaccharides. In terms of processing, may be N-glycosylated. Expressed in cell lines derived from endothelial cells, embryonic fibroblasts and preadipocytes. Expressed in skeletal muscle by a subset of pericytes.

The protein localises to the membrane. Functionally, cell surface glycoprotein involved in various biological processes including angiogenesis, immune response modulation, and tissue remodeling and repair. Participates in pericyte proliferation through positive modulation of the PDGF receptor signaling pathway. Acts as a scaffold for factor X, triggering allosteric changes and the spatial re-alignment of factor X with the TF-factor VIIa complex, thereby enhancing coagulation activation. Modulates the insulin signaling pathway by interacting with insulin receptor/INSR and by diminishing its capacity to be autophosphorylated in response to insulin. Also regulates LPS-induced inflammatory responses in macrophages by favoring production of proinflammatory cytokines. This Mus musculus (Mouse) protein is Endosialin (Cd248).